Reading from the N-terminus, the 292-residue chain is Tyrosine isonitrile desaturase (292 aa).

Residues histidine 110, aspartate 112, and histidine 259 each contribute to the Fe cation site.

It belongs to the TfdA dioxygenase family. Requires Fe(2+) as cofactor.

The enzyme catalyses (2S)-3-(4-hydroxyphenyl)-2-isocyanopropanoate + 2-oxoglutarate + O2 = (2E)-3-(4-hydroxyphenyl)-2-isocyanoprop-2-enoate + succinate + CO2 + H2O. Functionally, catalyzes the 2-oxoglutarate-dependent oxidation of tyrosine isonitrile. The protein is Tyrosine isonitrile desaturase of Erwinia amylovora (strain CFBP1430).